Reading from the N-terminus, the 242-residue chain is Phosphoribosylaminoimidazole-succinocarboxamide synthase (242 aa).

It belongs to the SAICAR synthetase family.

It catalyses the reaction 5-amino-1-(5-phospho-D-ribosyl)imidazole-4-carboxylate + L-aspartate + ATP = (2S)-2-[5-amino-1-(5-phospho-beta-D-ribosyl)imidazole-4-carboxamido]succinate + ADP + phosphate + 2 H(+). The protein operates within purine metabolism; IMP biosynthesis via de novo pathway; 5-amino-1-(5-phospho-D-ribosyl)imidazole-4-carboxamide from 5-amino-1-(5-phospho-D-ribosyl)imidazole-4-carboxylate: step 1/2. The protein is Phosphoribosylaminoimidazole-succinocarboxamide synthase of Prochlorococcus marinus subsp. pastoris (strain CCMP1986 / NIES-2087 / MED4).